A 216-amino-acid polypeptide reads, in one-letter code: Adenylate kinase (216 aa).

10-15 (GAGKGT) contacts ATP. The tract at residues 30–59 (STGDMLREAVKADTPLGIEAKKVMDVGGLI) is NMP. Residues Thr-31, Arg-36, 57-59 (GLI), 85-88 (GFPR), and Gln-92 contribute to the AMP site. Residues 122–159 (GRRAHLTSGRTYHIVYNPPKVEGIDDITGEELIQRTDD) form an LID region. ATP contacts are provided by residues Arg-123 and 132–133 (TY). 2 residues coordinate AMP: Arg-156 and Arg-167. Gly-202 is a binding site for ATP.

Belongs to the adenylate kinase family. Monomer.

The protein localises to the cytoplasm. It carries out the reaction AMP + ATP = 2 ADP. The protein operates within purine metabolism; AMP biosynthesis via salvage pathway; AMP from ADP: step 1/1. Its function is as follows. Catalyzes the reversible transfer of the terminal phosphate group between ATP and AMP. Plays an important role in cellular energy homeostasis and in adenine nucleotide metabolism. This is Adenylate kinase from Ruthia magnifica subsp. Calyptogena magnifica.